Consider the following 160-residue polypeptide: Protein MGF 300-2R (160 aa).

The protein belongs to the asfivirus MGF 300 family.

In terms of biological role, plays a role in virus cell tropism, and may be required for efficient virus replication in macrophages. The polypeptide is Protein MGF 300-2R (African swine fever virus (isolate Tick/South Africa/Pretoriuskop Pr4/1996) (ASFV)).